The chain runs to 289 residues: UTP--glucose-1-phosphate uridylyltransferase 2 (289 aa).

It belongs to the UDPGP type 2 family.

The catalysed reaction is alpha-D-glucose 1-phosphate + UTP + H(+) = UDP-alpha-D-glucose + diphosphate. It participates in glycolipid metabolism; diglucosyl-diacylglycerol biosynthesis. In terms of biological role, catalyzes the formation of UDP-glucose from glucose-1-phosphate and UTP. This is an intermediate step in the biosynthesis of diglucosyl-diacylglycerol (Glc2-DAG), i.e. a glycolipid found in the membrane, which is also used as a membrane anchor for lipoteichoic acid (LTA). This chain is UTP--glucose-1-phosphate uridylyltransferase 2 (gtaB2), found in Staphylococcus saprophyticus subsp. saprophyticus (strain ATCC 15305 / DSM 20229 / NCIMB 8711 / NCTC 7292 / S-41).